The following is a 120-amino-acid chain: MFLLYEYDIFWAFLIISSVIPILAFLISGLLSPIRKGPEKLSSYESGIEPMGDAWLQFRIRYYMFALVFVVFDVETVFLYPWAMSFDVLGVSVFIEALIFVLILIVGLVYAWRKGALEWS.

3 consecutive transmembrane segments (helical) span residues 9-29 (IFWA…LISG), 64-84 (MFAL…PWAM), and 88-108 (VLGV…IVGL).

Belongs to the complex I subunit 3 family. NDH is composed of at least 16 different subunits, 5 of which are encoded in the nucleus.

It localises to the plastid. It is found in the chloroplast thylakoid membrane. It catalyses the reaction a plastoquinone + NADH + (n+1) H(+)(in) = a plastoquinol + NAD(+) + n H(+)(out). It carries out the reaction a plastoquinone + NADPH + (n+1) H(+)(in) = a plastoquinol + NADP(+) + n H(+)(out). Its function is as follows. NDH shuttles electrons from NAD(P)H:plastoquinone, via FMN and iron-sulfur (Fe-S) centers, to quinones in the photosynthetic chain and possibly in a chloroplast respiratory chain. The immediate electron acceptor for the enzyme in this species is believed to be plastoquinone. Couples the redox reaction to proton translocation, and thus conserves the redox energy in a proton gradient. In Populus alba (White poplar), this protein is NAD(P)H-quinone oxidoreductase subunit 3, chloroplastic.